The chain runs to 107 residues: Cytochrome c oxidase assembly protein COX16 homolog, mitochondrial (107 aa).

The Mitochondrial matrix segment spans residues 1–14 (MFGYAVRRALRKSK). A helical transmembrane segment spans residues 15 to 37 (TLRYGVPMLLLIVGGSFGLREFS). The Mitochondrial intermembrane portion of the chain corresponds to 38-107 (QIRYDAVKIK…PEILKTNKTT (70 aa)). A disordered region spans residues 80-107 (NIRGPRPWEDPDLLQGRNPEILKTNKTT).

This sequence belongs to the COX16 family. In terms of assembly, associates with the MITRAC complex. Interacts with MT-CO2/COX; specifically interacts with newly synthesized MT-CO2/COX. Interacts with SCO1, SCO2 and COA6.

Its subcellular location is the mitochondrion inner membrane. Functionally, required for the assembly of the mitochondrial respiratory chain complex IV (CIV), also known as cytochrome c oxidase. Promotes the insertion of copper into the active site of cytochrome c oxidase subunit II (MT-CO2/COX2). Interacts specifically with newly synthesized MT-CO2/COX and its copper center-forming metallochaperones SCO1, SCO2 and COA6. Probably facilitates MT-CO2/COX2 association with the MITRAC assembly intermediate containing MT-CO1/COX1, thereby participating in merging the MT-CO1/COX1 and MT-CO2/COX2 assembly lines. The chain is Cytochrome c oxidase assembly protein COX16 homolog, mitochondrial from Bos taurus (Bovine).